We begin with the raw amino-acid sequence, 216 residues long: Guanylate kinase (216 aa).

Residues 12–191 enclose the Guanylate kinase-like domain; that stretch reads GLLFVISSPS…CVKQVKNILT (180 aa). 19 to 26 lines the ATP pocket; that stretch reads SPSGAGKS.

Belongs to the guanylate kinase family.

The protein localises to the cytoplasm. The catalysed reaction is GMP + ATP = GDP + ADP. Its function is as follows. Essential for recycling GMP and indirectly, cGMP. This chain is Guanylate kinase, found in Zymomonas mobilis subsp. mobilis (strain ATCC 31821 / ZM4 / CP4).